A 253-amino-acid chain; its full sequence is MTSQGRGTRRGGARGNVRAFPENPADAAGLTPRQRKVLEVIRAEVERRGYPPSVREIGEAVGLTSTSSVAHQLKVLEEKGYLRRDPNRPRAMEVLSPDRPRRKADSGAAAVVSTFPGAAAAPAGVGGEGSAAYVPVLGRIAAGGPILAEQAIEDVFPLPKEIVGEGTLFLLRVVGESMINAAICDGDWVVVRQQPVADNGEIVAAMIDGEATVKRLRVRDGKIWLHPENPTFSDIPGEEATILGRIVAVLRRI.

Positions 1–33 are disordered; sequence MTSQGRGTRRGGARGNVRAFPENPADAAGLTPR. A DNA-binding region (H-T-H motif) is located at residues 54 to 74; sequence VREIGEAVGLTSTSSVAHQLK. Catalysis depends on for autocatalytic cleavage activity residues serine 177 and lysine 214.

This sequence belongs to the peptidase S24 family. As to quaternary structure, homodimer.

It catalyses the reaction Hydrolysis of Ala-|-Gly bond in repressor LexA.. In terms of biological role, represses a number of genes involved in the response to DNA damage (SOS response), including recA and lexA. In the presence of single-stranded DNA, RecA interacts with LexA causing an autocatalytic cleavage which disrupts the DNA-binding part of LexA, leading to derepression of the SOS regulon and eventually DNA repair. In Frankia alni (strain DSM 45986 / CECT 9034 / ACN14a), this protein is LexA repressor.